The following is a 581-amino-acid chain: Bifunctional lycopene cyclase/phytoene synthase (581 aa).

The segment at 1-243 is lycopene beta-cyclase; that stretch reads MGFDYALVHL…IVFGQLAFDN (243 aa). Transmembrane regions (helical) follow at residues 3-23, 35-55, 65-85, 120-140, 152-172, 173-193, and 221-241; these read FDYA…LTLL, KVAF…SYLI, HVII…FFVV, LKRL…WFCV, ILIW…QFII, GLPF…LWIV, and IEEA…QLAF. The interval 250–581 is phytoene synthase; the sequence is AFPHLFPDPS…RVLVAWRTLN (332 aa).

This sequence in the N-terminal section; belongs to the lycopene beta-cyclase family. The protein in the C-terminal section; belongs to the phytoene/squalene synthase family.

It is found in the membrane. The catalysed reaction is all-trans-lycopene = gamma-carotene. It carries out the reaction gamma-carotene = all-trans-beta-carotene. It catalyses the reaction 2 (2E,6E,10E)-geranylgeranyl diphosphate = 15-cis-phytoene + 2 diphosphate. Its pathway is carotenoid biosynthesis; beta-carotene biosynthesis. It participates in carotenoid biosynthesis; phytoene biosynthesis; all-trans-phytoene from geranylgeranyl diphosphate: step 1/1. Its function is as follows. Bifunctional enzyme that catalyzes the reactions from geranylgeranyl diphosphate to phytoene (phytoene synthase) and lycopene to beta-carotene via the intermediate gamma-carotene (lycopene cyclase). In Leptosphaeria maculans (strain JN3 / isolate v23.1.3 / race Av1-4-5-6-7-8) (Blackleg fungus), this protein is Bifunctional lycopene cyclase/phytoene synthase.